The following is a 541-amino-acid chain: Interleukin-18 receptor 1 (541 aa).

An N-terminal signal peptide occupies residues 1–18; it reads MNCRELPLTLWVLISVST. Disulfide bonds link C22–C41 and C43–C81. The Extracellular portion of the chain corresponds to 22–329; the sequence is CTSRPHITVV…ADIPGHVFTR (308 aa). Ig-like C2-type domains lie at 33-121, 133-212, and 220-312; these read GEPF…SCFT, KKFF…DRSN, and PKLN…KSFI. 8 N-linked (GlcNAc...) asparagine glycosylation sites follow: N91, N102, N150, N197, N203, N236, N255, and N297. Disulfide bonds link C119–C158 and C140–C185. Cysteines 237 and 298 form a disulfide. The chain crosses the membrane as a helical span at residues 330 to 350; it reads GMIIAVLILVAVVCLVTVCVI. The Cytoplasmic segment spans residues 351 to 541; it reads YRVDLVLFYR…PEVLPVLSES (191 aa). Residues 373–520 form the TIR domain; sequence KTYDAFVSYL…RFWKNLLYLM (148 aa). The active site involves E455.

Belongs to the interleukin-1 receptor family. As to quaternary structure, forms a ternary complex with IL18 and IL18RAP. Within this complex, IL18R1 is involved in ligand-binding and IL18RAP in signaling leading to NF-kappa-B and JNK activation. Interacts with SLC12A3 in peritoneal macrophages; this interaction is increased by IL18 treatment. N-glycosylated. N-linked glycosyl chains contribute to ligand recognition and intra-receptor interactions required for formation of an active ternary receptor complex. As to expression, highly expressed in leukocytes, spleen, lung. Also expressed, but at lower levels, in liver, small intestine, colon, prostate, thymus, placenta, and heart. Specifically coexpressed with IL18R1 in Th1 cells.

It localises to the membrane. It catalyses the reaction NAD(+) + H2O = ADP-D-ribose + nicotinamide + H(+). Within the IL18 receptor complex, responsible for the binding of the pro-inflammatory cytokine IL18, but not IL1A nor IL1B. Involved in IL18-mediated IFNG synthesis from T-helper 1 (Th1) cells. Contributes to IL18-induced cytokine production, either independently of SLC12A3, or as a complex with SLC12A3. This Homo sapiens (Human) protein is Interleukin-18 receptor 1.